The chain runs to 357 residues: Sorbitol dehydrogenase (357 aa).

At alanine 2 the chain carries N-acetylalanine. Zn(2+) is bound at residue cysteine 45. Residue tyrosine 51 participates in substrate binding. Residues histidine 70, glutamate 71, and glutamate 156 each coordinate Zn(2+). Position 156 (glutamate 156) interacts with substrate. Serine 169 carries the post-translational modification Phosphoserine. NAD(+) contacts are provided by residues isoleucine 184, aspartate 204, arginine 209, 273-275 (VGM), and 297-299 (VFR). Positions 299 and 300 each coordinate substrate.

Belongs to the zinc-containing alcohol dehydrogenase family. Homotetramer; dimer of dimers. Zn(2+) is required as a cofactor. Expressed in liver and testis.

The protein localises to the mitochondrion membrane. Its subcellular location is the cell projection. It localises to the cilium. It is found in the flagellum. It catalyses the reaction keto-D-fructose + NADH + H(+) = D-sorbitol + NAD(+). The catalysed reaction is xylitol + NAD(+) = D-xylulose + NADH + H(+). It carries out the reaction L-iditol + NAD(+) = keto-L-sorbose + NADH + H(+). Its function is as follows. Polyol dehydrogenase that catalyzes the reversible NAD(+)-dependent oxidation of various sugar alcohols. Is active with D-sorbitol (D-glucitol) leading to the C2-oxidized product D-fructose. Is a key enzyme in the polyol pathway that interconverts glucose and fructose via sorbitol, which constitutes an important alternate route for glucose metabolism. May play a role in sperm motility by using sorbitol as an alternative energy source for sperm motility. The protein is Sorbitol dehydrogenase (Sord) of Rattus norvegicus (Rat).